The sequence spans 562 residues: NAD-dependent malic enzyme (562 aa).

Y101 serves as the catalytic Proton donor. R154 contributes to the NAD(+) binding site. K172 acts as the Proton acceptor in catalysis. 3 residues coordinate a divalent metal cation: E243, D244, and D267. Residues D267 and N415 each coordinate NAD(+).

This sequence belongs to the malic enzymes family. As to quaternary structure, homotetramer. It depends on Mg(2+) as a cofactor. Requires Mn(2+) as cofactor.

The catalysed reaction is (S)-malate + NAD(+) = pyruvate + CO2 + NADH. It carries out the reaction oxaloacetate + H(+) = pyruvate + CO2. This Shewanella denitrificans (strain OS217 / ATCC BAA-1090 / DSM 15013) protein is NAD-dependent malic enzyme.